Consider the following 167-residue polypeptide: Putative peroxiredoxin-A (167 aa).

The region spanning 4–167 (IKRGDRFPTT…STAQKIIAKL (164 aa)) is the Thioredoxin domain. Catalysis depends on Cys-53, which acts as the Cysteine sulfenic acid (-SOH) intermediate. A Microbody targeting signal motif is present at residues 165–167 (AKL).

Belongs to the peroxiredoxin family. Prx5 subfamily.

The protein resides in the peroxisome membrane. The enzyme catalyses a hydroperoxide + [thioredoxin]-dithiol = an alcohol + [thioredoxin]-disulfide + H2O. Functionally, thiol-specific peroxidase that catalyzes the reduction of hydrogen peroxide and organic hydroperoxides to water and alcohols, respectively. Plays a role in cell protection against oxidative stress by detoxifying peroxides and as sensor of hydrogen peroxide-mediated signaling events. In Candida boidinii (Yeast), this protein is Putative peroxiredoxin-A (PMPA).